A 210-amino-acid chain; its full sequence is Large ribosomal subunit protein uL3 (210 aa).

The disordered stretch occupies residues 119 to 151 (FQGAIKRHGQSRGPMSHGSRYHRRPGSMGPVAP).

Belongs to the universal ribosomal protein uL3 family. In terms of assembly, part of the 50S ribosomal subunit. Forms a cluster with proteins L14 and L19.

One of the primary rRNA binding proteins, it binds directly near the 3'-end of the 23S rRNA, where it nucleates assembly of the 50S subunit. The polypeptide is Large ribosomal subunit protein uL3 (Bacillus cytotoxicus (strain DSM 22905 / CIP 110041 / 391-98 / NVH 391-98)).